A 298-amino-acid polypeptide reads, in one-letter code: Formylmethanofuran--tetrahydromethanopterin formyltransferase (298 aa).

Belongs to the FTR family. In terms of assembly, homotetramer.

The protein resides in the cytoplasm. The enzyme catalyses N-formylmethanofuran + 5,6,7,8-tetrahydromethanopterin + H(+) = N(5)-formyl-5,6,7,8-tetrahydromethanopterin + methanofuran. The protein operates within one-carbon metabolism; formaldehyde degradation; formate from formaldehyde (H(4)MPT route): step 4/5. Its function is as follows. Catalyzes the transfer of a formyl group from 5-formyl tetrahydromethanopterin (5-formyl-H(4)MPT) to methanofuran (MFR) to produce formylmethanofuran (formyl-MFR) and tetrahydromethanopterin (H(4)MPT). The polypeptide is Formylmethanofuran--tetrahydromethanopterin formyltransferase (Methylococcus capsulatus (strain ATCC 33009 / NCIMB 11132 / Bath)).